Reading from the N-terminus, the 276-residue chain is Dermonecrotic toxin LlSicTox-alphaIV2iii (276 aa).

Residue H5 is part of the active site. Mg(2+)-binding residues include E25 and D27. H41 functions as the Nucleophile in the catalytic mechanism. Disulfide bonds link C45-C51 and C47-C193. Position 85 (D85) interacts with Mg(2+).

Belongs to the arthropod phospholipase D family. Class II subfamily. It depends on Mg(2+) as a cofactor. Expressed by the venom gland.

The protein localises to the secreted. It carries out the reaction an N-(acyl)-sphingosylphosphocholine = an N-(acyl)-sphingosyl-1,3-cyclic phosphate + choline. The enzyme catalyses an N-(acyl)-sphingosylphosphoethanolamine = an N-(acyl)-sphingosyl-1,3-cyclic phosphate + ethanolamine. It catalyses the reaction a 1-acyl-sn-glycero-3-phosphocholine = a 1-acyl-sn-glycero-2,3-cyclic phosphate + choline. The catalysed reaction is a 1-acyl-sn-glycero-3-phosphoethanolamine = a 1-acyl-sn-glycero-2,3-cyclic phosphate + ethanolamine. In terms of biological role, dermonecrotic toxins cleave the phosphodiester linkage between the phosphate and headgroup of certain phospholipids (sphingolipid and lysolipid substrates), forming an alcohol (often choline) and a cyclic phosphate. This toxin acts on sphingomyelin (SM). It may also act on ceramide phosphoethanolamine (CPE), lysophosphatidylcholine (LPC) and lysophosphatidylethanolamine (LPE), but not on lysophosphatidylserine (LPS), and lysophosphatidylglycerol (LPG). It acts by transphosphatidylation, releasing exclusively cyclic phosphate products as second products. Induces dermonecrosis, hemolysis, increased vascular permeability, edema, inflammatory response, and platelet aggregation. The sequence is that of Dermonecrotic toxin LlSicTox-alphaIV2iii from Loxosceles laeta (South American recluse spider).